The following is a 216-amino-acid chain: Uracil phosphoribosyltransferase (216 aa).

Residues 29–30 and Arg-37 each bind CTP; that span reads RK. A GTP-binding site is contributed by 30-34; it reads KNLVR. Arg-80 contacts 5-phospho-alpha-D-ribose 1-diphosphate. CTP is bound at residue 87 to 96; that stretch reads EGLLKAFPKA. Residues Arg-105 and 140-148 contribute to the 5-phospho-alpha-D-ribose 1-diphosphate site; that span reads DPMIATAST. Residues Ile-203 and 208-210 contribute to the uracil site; that span reads GDA. Asp-209 is a 5-phospho-alpha-D-ribose 1-diphosphate binding site.

The protein belongs to the UPRTase family. Homotetramer. Mg(2+) serves as cofactor.

It carries out the reaction UMP + diphosphate = 5-phospho-alpha-D-ribose 1-diphosphate + uracil. It functions in the pathway pyrimidine metabolism; UMP biosynthesis via salvage pathway; UMP from uracil: step 1/1. With respect to regulation, allosterically activated by GTP. Inhibited by CTP and UMP in combination. In terms of biological role, catalyzes the conversion of uracil and 5-phospho-alpha-D-ribose 1-diphosphate (PRPP) to UMP and diphosphate. The protein is Uracil phosphoribosyltransferase (upp) of Saccharolobus solfataricus (strain ATCC 35092 / DSM 1617 / JCM 11322 / P2) (Sulfolobus solfataricus).